We begin with the raw amino-acid sequence, 448 residues long: Probable intron-encoded endonuclease bI1 (448 aa).

Positions 1-132 (MRLLKSHPLL…LMMATAFLGY (132 aa)) are cob exon 1 encoded. 3 helical membrane passes run 32-52 (FGSL…TLAM), 86-106 (ASAF…YGSY), and 112-132 (LVWA…FLGY). The tract at residues 133–448 (QHSPKWFDIS…QWIVEDFSDK (316 aa)) is cob intron 1 encoded. The GIY-YIG domain maps to 230-321 (DLSGVYMIIN…LKLLVPNYNI (92 aa)).

This sequence to endonucleases of group I introns of fungi and phage. In terms of processing, the mature protein may arise from proteolytic cleavage of an in-frame translation of cob exon 1 plus intron 1, containing the bI1 open reading frame.

The protein localises to the mitochondrion inner membrane. Its function is as follows. Mitochondrial DNA endonuclease involved in intron homing. The sequence is that of Probable intron-encoded endonuclease bI1 (bI1) from Neurospora crassa (strain ATCC 24698 / 74-OR23-1A / CBS 708.71 / DSM 1257 / FGSC 987).